A 154-amino-acid polypeptide reads, in one-letter code: Ribosomal RNA large subunit methyltransferase H (154 aa).

S-adenosyl-L-methionine is bound by residues Leu-70, Gly-102, and 121–126 (LSRLTF).

This sequence belongs to the RNA methyltransferase RlmH family. In terms of assembly, homodimer.

It localises to the cytoplasm. The enzyme catalyses pseudouridine(1915) in 23S rRNA + S-adenosyl-L-methionine = N(3)-methylpseudouridine(1915) in 23S rRNA + S-adenosyl-L-homocysteine + H(+). Specifically methylates the pseudouridine at position 1915 (m3Psi1915) in 23S rRNA. The protein is Ribosomal RNA large subunit methyltransferase H of Geobacter metallireducens (strain ATCC 53774 / DSM 7210 / GS-15).